A 293-amino-acid chain; its full sequence is Probable porphobilinogen deaminase (293 aa).

Residue Cys233 is modified to S-(dipyrrolylmethanemethyl)cysteine.

This sequence belongs to the HMBS family. Dipyrromethane is required as a cofactor.

The enzyme catalyses 4 porphobilinogen + H2O = hydroxymethylbilane + 4 NH4(+). It functions in the pathway porphyrin-containing compound metabolism; protoporphyrin-IX biosynthesis; coproporphyrinogen-III from 5-aminolevulinate: step 2/4. Functionally, tetrapolymerization of the monopyrrole PBG into the hydroxymethylbilane pre-uroporphyrinogen in several discrete steps. The protein is Probable porphobilinogen deaminase of Saccharolobus islandicus (strain L.S.2.15 / Lassen #1) (Sulfolobus islandicus).